A 239-amino-acid chain; its full sequence is MGLGKTEWEDIQIKYGNMEAPPKQLTEDELFDLIKEAAEMATEAEKNEKLENASLKDLKDMEDDEDEDVLEQLRKKRIQQMKVEAELNKFGELKEISEPSYKSEVTECKGVMVVVHLFKNGIPQCQLVNQHLTILAKKFKATKFVKIRSEEAIHNYPDKNLPTILVYFNGDIVGQIITLRATGGDATTVNDIEWQLKQAHAIKSDLQEDPRITLARKKSQKSRYSKADSDESDNSDSDD.

Residues 26–87 (TEDELFDLIK…IQQMKVEAEL (62 aa)) adopt a coiled-coil conformation. Positions 36 to 196 (EAAEMATEAE…TTVNDIEWQL (161 aa)) constitute a Phosducin domain. The segment covering 42 to 59 (TEAEKNEKLENASLKDLK) has biased composition (basic and acidic residues). 2 disordered regions span residues 42–64 (TEAE…MEDD) and 212–239 (ITLA…DSDD). The thioredoxin fold stretch occupies residues 90–239 (FGELKEISEP…DESDNSDSDD (150 aa)). Basic residues predominate over residues 214 to 224 (LARKKSQKSRY). Positions 230-239 (DESDNSDSDD) are enriched in acidic residues.

The protein belongs to the phosducin family.

In Dictyostelium discoideum (Social amoeba), this protein is Phosducin-like protein 2 (phlp2).